Reading from the N-terminus, the 944-residue chain is Protein phosphatase 1 regulatory subunit 37 homolog (944 aa).

The tract at residues 42–71 (QQQSHSAATSVRKKTCQDANSSGEDPNGRI) is disordered. LRR repeat units lie at residues 203–224 (SCVRLNLSFNKQIDMRGWTTIF), 232–255 (SLQMLNLRYTNLNDRSIPALCKMA), 262–282 (SLTCLHLENTQMSGKNLLVLI), 290–311 (GLRELYLGDNGLQPTDGSHIYQ), and 318–338 (SLQLLDLRNNSIGDSGVRHIC). A disordered region spans residues 517–598 (EEGDSGVEKK…KERHQRFVRS (82 aa)). The segment covering 522–542 (GVEKKDGNECEGEDNKDRQDT) has biased composition (basic and acidic residues). Composition is skewed to polar residues over residues 543 to 554 (PAETENGVSSNE) and 567 to 585 (PESNNNEKSPLMASSSTSK). The segment covering 586-595 (LSRKERHQRF) has biased composition (basic residues).

Belongs to the PPP1R37 family.

The sequence is that of Protein phosphatase 1 regulatory subunit 37 homolog from Caenorhabditis elegans.